We begin with the raw amino-acid sequence, 128 residues long: Insoluble matrix shell protein 3 (128 aa).

The N-terminal stretch at 1–19 (MLMLLCIIATVIPFSLVEG) is a signal peptide.

In terms of tissue distribution, component of the acid-insoluble organic matrix of the calcified shell.

The protein localises to the secreted. This chain is Insoluble matrix shell protein 3, found in Ruditapes philippinarum (Japanese carpet shell).